We begin with the raw amino-acid sequence, 233 residues long: 2-C-methyl-D-erythritol 4-phosphate cytidylyltransferase (233 aa).

The protein belongs to the IspD/TarI cytidylyltransferase family. IspD subfamily.

The enzyme catalyses 2-C-methyl-D-erythritol 4-phosphate + CTP + H(+) = 4-CDP-2-C-methyl-D-erythritol + diphosphate. It functions in the pathway isoprenoid biosynthesis; isopentenyl diphosphate biosynthesis via DXP pathway; isopentenyl diphosphate from 1-deoxy-D-xylulose 5-phosphate: step 2/6. In terms of biological role, catalyzes the formation of 4-diphosphocytidyl-2-C-methyl-D-erythritol from CTP and 2-C-methyl-D-erythritol 4-phosphate (MEP). This is 2-C-methyl-D-erythritol 4-phosphate cytidylyltransferase from Vibrio atlanticus (strain LGP32) (Vibrio splendidus (strain Mel32)).